Reading from the N-terminus, the 287-residue chain is Ribonuclease Z (287 aa).

Residues H64, H66, D68, H69, H124, D191, and H250 each contribute to the Zn(2+) site. Residue D68 is the Proton acceptor of the active site.

It belongs to the RNase Z family. As to quaternary structure, homodimer. It depends on Zn(2+) as a cofactor.

It catalyses the reaction Endonucleolytic cleavage of RNA, removing extra 3' nucleotides from tRNA precursor, generating 3' termini of tRNAs. A 3'-hydroxy group is left at the tRNA terminus and a 5'-phosphoryl group is left at the trailer molecule.. In terms of biological role, zinc phosphodiesterase, which displays some tRNA 3'-processing endonuclease activity. Probably involved in tRNA maturation, by removing a 3'-trailer from precursor tRNA. This chain is Ribonuclease Z, found in Pyrobaculum aerophilum (strain ATCC 51768 / DSM 7523 / JCM 9630 / CIP 104966 / NBRC 100827 / IM2).